The sequence spans 427 residues: Enolase (427 aa).

Q163 lines the (2R)-2-phosphoglycerate pocket. Catalysis depends on E205, which acts as the Proton donor. Residues D242, E287, and D314 each contribute to the Mg(2+) site. K339, R368, S369, and K390 together coordinate (2R)-2-phosphoglycerate. Catalysis depends on K339, which acts as the Proton acceptor.

It belongs to the enolase family. It depends on Mg(2+) as a cofactor.

It localises to the cytoplasm. Its subcellular location is the secreted. The protein localises to the cell surface. The enzyme catalyses (2R)-2-phosphoglycerate = phosphoenolpyruvate + H2O. Its pathway is carbohydrate degradation; glycolysis; pyruvate from D-glyceraldehyde 3-phosphate: step 4/5. In terms of biological role, catalyzes the reversible conversion of 2-phosphoglycerate (2-PG) into phosphoenolpyruvate (PEP). It is essential for the degradation of carbohydrates via glycolysis. In Solibacter usitatus (strain Ellin6076), this protein is Enolase.